Consider the following 241-residue polypeptide: Fatty acid metabolism regulator protein (241 aa).

The region spanning 11–79 (QSPAGLAEEY…HGKPTKVNNI (69 aa)) is the HTH gntR-type domain. A DNA-binding region (H-T-H motif) is located at residues 39-58 (ERELAEKIGVTRTTLREVLQ).

Homodimer.

The protein localises to the cytoplasm. Its function is as follows. Multifunctional regulator of fatty acid metabolism. This Pasteurella multocida (strain Pm70) protein is Fatty acid metabolism regulator protein.